The primary structure comprises 669 residues: Zeaxanthin epoxidase, chloroplastic (669 aa).

The N-terminal 49 residues, 1–49 (MYSTVFYTSVHPSTSVLSRKQLPLLISKDFSAELYHSLPCRSLENGHIN), are a transit peptide targeting the chloroplast. Residues 87 to 115 (KVLV…LVFE) and 365 to 378 (TFSW…LLGD) contribute to the FAD site. An FHA domain is found at 553–617 (IVLSRDEDVP…HGTWVTDNEG (65 aa)).

FAD serves as cofactor.

Its subcellular location is the plastid. The protein resides in the chloroplast. The enzyme catalyses all-trans-zeaxanthin + 4 reduced [2Fe-2S]-[ferredoxin] + 2 O2 + 4 H(+) = all-trans-violaxanthin + 4 oxidized [2Fe-2S]-[ferredoxin] + 2 H2O. The protein operates within plant hormone biosynthesis; abscisate biosynthesis. Functionally, converts zeaxanthin into antheraxanthin and subsequently violaxanthin. Involved in the epoxidation of zeaxanthin. Plays an important role in resistance to stresses, seed development and dormancy. The sequence is that of Zeaxanthin epoxidase, chloroplastic from Solanum lycopersicum (Tomato).